A 323-amino-acid polypeptide reads, in one-letter code: Methenyltetrahydromethanopterin cyclohydrolase (323 aa).

This sequence belongs to the MCH family.

The protein localises to the cytoplasm. The enzyme catalyses 5,10-methenyl-5,6,7,8-tetrahydromethanopterin + H2O = N(5)-formyl-5,6,7,8-tetrahydromethanopterin + H(+). The protein operates within one-carbon metabolism; methanogenesis from CO(2); 5,10-methenyl-5,6,7,8-tetrahydromethanopterin from CO(2): step 3/3. In terms of biological role, catalyzes the reversible interconversion of 5-formyl-H(4)MPT to methenyl-H(4)MPT(+). The polypeptide is Methenyltetrahydromethanopterin cyclohydrolase (Methanococcus maripaludis (strain C5 / ATCC BAA-1333)).